A 259-amino-acid chain; its full sequence is Dickkopf-related protein 2 (259 aa).

The signal sequence occupies residues 1–33 (MAALMRVKDSSRCLLLLAAVLMVESSQLGSSRA). Positions 42–70 (LGGETPAQSANRSAGMNQGLAFGGSKKGK) are disordered. A compositionally biased stretch (polar residues) spans 47-57 (PAQSANRSAGM). Asn52 carries N-linked (GlcNAc...) asparagine glycosylation. The tract at residues 78–127 (CSSDKECEVGRYCHSPHQGSSACMLCRRKKKRCHRDGMCCPGTRCNNGIC) is DKK-type Cys-1. 5 cysteine pairs are disulfide-bonded: Cys183–Cys195, Cys189–Cys204, Cys194–Cys231, Cys214–Cys239, and Cys233–Cys256. The segment at 183 to 256 (CLRSSDCIDG…YSSKARLHVC (74 aa)) is DKK-type Cys-2.

Belongs to the dickkopf family. As to quaternary structure, interacts with LRP5 and LRP6. May be proteolytically processed by a furin-like protease.

Its subcellular location is the secreted. Its function is as follows. Antagonizes canonical Wnt signaling by inhibiting LRP5/6 interaction with Wnt and by forming a ternary complex with the transmembrane protein KREMEN that promotes internalization of LRP5/6. DKKs play an important role in vertebrate development, where they locally inhibit Wnt regulated processes such as antero-posterior axial patterning, limb development, somitogenesis and eye formation. In the adult, Dkks are implicated in bone formation and bone disease, cancer and Alzheimer disease. The sequence is that of Dickkopf-related protein 2 from Mus musculus (Mouse).